A 144-amino-acid chain; its full sequence is Ribonuclease H (144 aa).

In terms of domain architecture, RNase H type-1 spans 1-136 (MKIVTLFSDG…CDQMARNEAL (136 aa)). Mg(2+) is bound by residues aspartate 9, glutamate 47, aspartate 69, and aspartate 128.

This sequence belongs to the RNase H family. Monomer. Requires Mg(2+) as cofactor.

The protein resides in the cytoplasm. The catalysed reaction is Endonucleolytic cleavage to 5'-phosphomonoester.. Endonuclease that specifically degrades the RNA of RNA-DNA hybrids. The chain is Ribonuclease H from Campylobacter concisus (strain 13826).